Reading from the N-terminus, the 78-residue chain is Signal peptidase complex subunit 1 (78 aa).

The Cytoplasmic portion of the chain corresponds to 1–18; it reads MNYLEGTIDFAGQLRCQK. A helical transmembrane segment spans residues 19–38; sequence YMNYGLCTSAVISYIYGYLV. At 39 to 42 the chain is on the lumenal side; it reads QDSY. The chain crosses the membrane as a helical span at residues 43–63; it reads CVIKLFLILASLVALVCLPAW. The Cytoplasmic portion of the chain corresponds to 64 to 78; sequence SMYNKNPLKFQKKKE.

Belongs to the SPCS1 family. Component of the signal peptidase complex (SPC) composed of a catalytic subunit sec11 and three accessory subunits spc1, spc2 and spc3. The complex induces a local thinning of the ER membrane which is used to measure the length of the signal peptide (SP) h-region of protein substrates. This ensures the selectivity of the complex towards h-regions shorter than 18-20 amino acids. SPC associates with the translocon complex.

It is found in the endoplasmic reticulum membrane. Functionally, component of the signal peptidase complex (SPC) which catalyzes the cleavage of N-terminal signal sequences from nascent proteins as they are translocated into the lumen of the endoplasmic reticulum. Dispensable for SPC enzymatic activity. In Schizosaccharomyces pombe (strain 972 / ATCC 24843) (Fission yeast), this protein is Signal peptidase complex subunit 1.